Reading from the N-terminus, the 317-residue chain is Aspartate carbamoyltransferase catalytic subunit (317 aa).

2 residues coordinate carbamoyl phosphate: arginine 64 and threonine 65. Lysine 92 is an L-aspartate binding site. Residues arginine 114, histidine 144, and glutamine 147 each contribute to the carbamoyl phosphate site. Residues arginine 177 and arginine 232 each coordinate L-aspartate. Residues glycine 273 and proline 274 each coordinate carbamoyl phosphate.

This sequence belongs to the aspartate/ornithine carbamoyltransferase superfamily. ATCase family. Heterododecamer (2C3:3R2) of six catalytic PyrB chains organized as two trimers (C3), and six regulatory PyrI chains organized as three dimers (R2).

The enzyme catalyses carbamoyl phosphate + L-aspartate = N-carbamoyl-L-aspartate + phosphate + H(+). Its pathway is pyrimidine metabolism; UMP biosynthesis via de novo pathway; (S)-dihydroorotate from bicarbonate: step 2/3. In terms of biological role, catalyzes the condensation of carbamoyl phosphate and aspartate to form carbamoyl aspartate and inorganic phosphate, the committed step in the de novo pyrimidine nucleotide biosynthesis pathway. The chain is Aspartate carbamoyltransferase catalytic subunit from Thiobacillus denitrificans (strain ATCC 25259 / T1).